The sequence spans 257 residues: Mitochondrial distribution and morphology protein 12 (257 aa).

The 256-residue stretch at 1–256 (MSFEINWEKL…WPSWVNLDFN (256 aa)) folds into the SMP-LTD domain. The interval 74-98 (YEEDNETSSEMHGRDGQNVGESGEE) is disordered.

It belongs to the MDM12 family. As to quaternary structure, component of the ER-mitochondria encounter structure (ERMES) or MDM complex, composed of MMM1, MDM10, MDM12 and MDM34. An MMM1 homodimer associates with one molecule of MDM12 on each side in a pairwise head-to-tail manner, and the SMP-LTD domains of MMM1 and MDM12 generate a continuous hydrophobic tunnel for phospholipid trafficking.

Its subcellular location is the mitochondrion outer membrane. It localises to the endoplasmic reticulum membrane. Functionally, component of the ERMES/MDM complex, which serves as a molecular tether to connect the endoplasmic reticulum (ER) and mitochondria. Components of this complex are involved in the control of mitochondrial shape and protein biogenesis, and function in nonvesicular lipid trafficking between the ER and mitochondria. MDM12 is required for the interaction of the ER-resident membrane protein MMM1 and the outer mitochondrial membrane-resident beta-barrel protein MDM10. The MDM12-MMM1 subcomplex functions in the major beta-barrel assembly pathway that is responsible for biogenesis of all mitochondrial outer membrane beta-barrel proteins, and acts in a late step after the SAM complex. The MDM10-MDM12-MMM1 subcomplex further acts in the TOM40-specific pathway after the action of the MDM12-MMM1 complex. Essential for establishing and maintaining the structure of mitochondria and maintenance of mtDNA nucleoids. The polypeptide is Mitochondrial distribution and morphology protein 12 (Candida glabrata (strain ATCC 2001 / BCRC 20586 / JCM 3761 / NBRC 0622 / NRRL Y-65 / CBS 138) (Yeast)).